The primary structure comprises 301 residues: Ribosomal protein L11 methyltransferase (301 aa).

S-adenosyl-L-methionine is bound by residues T146, G167, D189, and N237.

This sequence belongs to the methyltransferase superfamily. PrmA family.

It is found in the cytoplasm. The enzyme catalyses L-lysyl-[protein] + 3 S-adenosyl-L-methionine = N(6),N(6),N(6)-trimethyl-L-lysyl-[protein] + 3 S-adenosyl-L-homocysteine + 3 H(+). Methylates ribosomal protein L11. The chain is Ribosomal protein L11 methyltransferase from Prochlorococcus marinus (strain MIT 9303).